The chain runs to 38 residues: Large ribosomal subunit protein bL36 (38 aa).

Belongs to the bacterial ribosomal protein bL36 family.

This chain is Large ribosomal subunit protein bL36, found in Alcanivorax borkumensis (strain ATCC 700651 / DSM 11573 / NCIMB 13689 / SK2).